A 374-amino-acid polypeptide reads, in one-letter code: 5-hydroxytryptamine receptor 1D (374 aa).

N-linked (GlcNAc...) asparagine glycosylation is found at Asn-5, Asn-17, and Asn-21. A run of 3 helical transmembrane segments spans residues 36–61 (ISLV…TTIL), 73–94 (LIGS…ISIA), and 107–131 (LCDI…VIAL). Cys-108 and Cys-185 are joined by a disulfide. The serotonin site is built by Asp-115 and Cys-119. A DRY motif; important for ligand-induced conformation changes motif is present at residues 132–134 (DRY). A run of 4 helical transmembrane segments spans residues 152-173 (AAAM…PLFW), 192-215 (ISYT…ILYG), 298-323 (KTLG…VLPI), and 333-356 (ALFD…YTVF). Ser-318 contributes to the serotonin binding site. Residues 349-353 (NPVIY) carry the NPxxY motif; important for ligand-induced conformation changes and signaling motif.

Belongs to the G-protein coupled receptor 1 family. Homodimer. Heterodimer with HTR1B. As to expression, detected in dorsal raphe.

It is found in the cell membrane. G-protein coupled receptor for 5-hydroxytryptamine (serotonin). Also functions as a receptor for ergot alkaloid derivatives, various anxiolytic and antidepressant drugs and other psychoactive substances. Ligand binding causes a conformation change that triggers signaling via guanine nucleotide-binding proteins (G proteins) and modulates the activity of downstream effectors, such as adenylate cyclase. HTR1D is coupled to G(i)/G(o) G alpha proteins and mediates inhibitory neurotransmission by inhibiting adenylate cyclase activity. Regulates the release of 5-hydroxytryptamine in the brain, and thereby affects neural activity. May also play a role in regulating the release of other neurotransmitters. May play a role in vasoconstriction. The polypeptide is 5-hydroxytryptamine receptor 1D (Htr1d) (Rattus norvegicus (Rat)).